We begin with the raw amino-acid sequence, 389 residues long: Chalcone synthase E (389 aa).

Residue cysteine 164 is part of the active site.

This sequence belongs to the thiolase-like superfamily. Chalcone/stilbene synthases family.

It catalyses the reaction (E)-4-coumaroyl-CoA + 3 malonyl-CoA + 3 H(+) = 2',4,4',6'-tetrahydroxychalcone + 3 CO2 + 4 CoA. It functions in the pathway secondary metabolite biosynthesis; flavonoid biosynthesis. Functionally, the primary product of this enzyme is 4,2',4',6'-tetrahydroxychalcone (also termed naringenin-chalcone or chalcone) which can under specific conditions spontaneously isomerize into naringenin. The polypeptide is Chalcone synthase E (CHSE) (Ipomoea nil (Japanese morning glory)).